Consider the following 154-residue polypeptide: UPF0225 protein SG1365 (154 aa).

Belongs to the UPF0225 family.

This chain is UPF0225 protein SG1365, found in Sodalis glossinidius (strain morsitans).